The primary structure comprises 350 residues: Dihydroorotate dehydrogenase (quinone) (350 aa).

Residues 59 to 63 and Thr83 contribute to the FMN site; that span reads AGLDK. Lys63 serves as a coordination point for substrate. 108–112 contributes to the substrate binding site; it reads NRMGF. FMN contacts are provided by Asn136 and Asn169. Asn169 provides a ligand contact to substrate. Ser172 acts as the Nucleophile in catalysis. Asn174 contacts substrate. 2 residues coordinate FMN: Lys214 and Thr242. Position 243–244 (243–244) interacts with substrate; that stretch reads NT. Residues Gly265, Gly294, and 315–316 each bind FMN; that span reads YS.

The protein belongs to the dihydroorotate dehydrogenase family. Type 2 subfamily. In terms of assembly, monomer. It depends on FMN as a cofactor.

The protein resides in the cell membrane. It carries out the reaction (S)-dihydroorotate + a quinone = orotate + a quinol. It participates in pyrimidine metabolism; UMP biosynthesis via de novo pathway; orotate from (S)-dihydroorotate (quinone route): step 1/1. Catalyzes the conversion of dihydroorotate to orotate with quinone as electron acceptor. This Aromatoleum aromaticum (strain DSM 19018 / LMG 30748 / EbN1) (Azoarcus sp. (strain EbN1)) protein is Dihydroorotate dehydrogenase (quinone).